The chain runs to 234 residues: Orotidine 5'-phosphate decarboxylase (234 aa).

Substrate is bound by residues Asp-10, Lys-32, 59–68 (DLKLHDIPTT), Thr-122, Arg-184, Gln-193, Gly-213, and Arg-214. Catalysis depends on Lys-61, which acts as the Proton donor.

Belongs to the OMP decarboxylase family. Type 1 subfamily. As to quaternary structure, homodimer.

It carries out the reaction orotidine 5'-phosphate + H(+) = UMP + CO2. The protein operates within pyrimidine metabolism; UMP biosynthesis via de novo pathway; UMP from orotate: step 2/2. Functionally, catalyzes the decarboxylation of orotidine 5'-monophosphate (OMP) to uridine 5'-monophosphate (UMP). This chain is Orotidine 5'-phosphate decarboxylase, found in Bacillus pumilus (strain SAFR-032).